The chain runs to 163 residues: NADH-quinone oxidoreductase subunit I (163 aa).

2 4Fe-4S ferredoxin-type domains span residues 53–83 (LRRYPNGEERCIACKLCEAVCPACAITIEAG) and 94–123 (TLYDIDAFKCINCGFCEEACPVDAIVLTPE). 8 residues coordinate [4Fe-4S] cluster: Cys-63, Cys-66, Cys-69, Cys-73, Cys-103, Cys-106, Cys-109, and Cys-113.

The protein belongs to the complex I 23 kDa subunit family. As to quaternary structure, NDH-1 is composed of 14 different subunits. Subunits NuoA, H, J, K, L, M, N constitute the membrane sector of the complex. The cofactor is [4Fe-4S] cluster.

The protein resides in the cell inner membrane. The catalysed reaction is a quinone + NADH + 5 H(+)(in) = a quinol + NAD(+) + 4 H(+)(out). Its function is as follows. NDH-1 shuttles electrons from NADH, via FMN and iron-sulfur (Fe-S) centers, to quinones in the respiratory chain. The immediate electron acceptor for the enzyme in this species is believed to be ubiquinone. Couples the redox reaction to proton translocation (for every two electrons transferred, four hydrogen ions are translocated across the cytoplasmic membrane), and thus conserves the redox energy in a proton gradient. This is NADH-quinone oxidoreductase subunit I from Coxiella burnetii (strain Dugway 5J108-111).